Reading from the N-terminus, the 418-residue chain is UDP-N-acetylglucosamine 1-carboxyvinyltransferase (418 aa).

A phosphoenolpyruvate-binding site is contributed by 22–23 (KN). UDP-N-acetyl-alpha-D-glucosamine is bound at residue Arg92. Cys116 functions as the Proton donor in the catalytic mechanism. The residue at position 116 (Cys116) is a 2-(S-cysteinyl)pyruvic acid O-phosphothioketal. UDP-N-acetyl-alpha-D-glucosamine-binding positions include 121–125 (RPVDQ), Asp306, and Ile328.

This sequence belongs to the EPSP synthase family. MurA subfamily.

The protein localises to the cytoplasm. The catalysed reaction is phosphoenolpyruvate + UDP-N-acetyl-alpha-D-glucosamine = UDP-N-acetyl-3-O-(1-carboxyvinyl)-alpha-D-glucosamine + phosphate. It participates in cell wall biogenesis; peptidoglycan biosynthesis. Its function is as follows. Cell wall formation. Adds enolpyruvyl to UDP-N-acetylglucosamine. This chain is UDP-N-acetylglucosamine 1-carboxyvinyltransferase, found in Acinetobacter baylyi (strain ATCC 33305 / BD413 / ADP1).